The chain runs to 226 residues: UPF0173 metal-dependent hydrolase SRU_1937 (226 aa).

The protein belongs to the UPF0173 family.

This Salinibacter ruber (strain DSM 13855 / M31) protein is UPF0173 metal-dependent hydrolase SRU_1937.